The following is a 229-amino-acid chain: Large ribosomal subunit protein uL1 (229 aa).

It belongs to the universal ribosomal protein uL1 family. In terms of assembly, part of the 50S ribosomal subunit.

In terms of biological role, binds directly to 23S rRNA. The L1 stalk is quite mobile in the ribosome, and is involved in E site tRNA release. Its function is as follows. Protein L1 is also a translational repressor protein, it controls the translation of the L11 operon by binding to its mRNA. This chain is Large ribosomal subunit protein uL1, found in Magnetococcus marinus (strain ATCC BAA-1437 / JCM 17883 / MC-1).